A 448-amino-acid chain; its full sequence is Argininosuccinate synthase (448 aa).

Residues 17–25 (AFSGGLDTS) and A43 each bind ATP. Y99 lines the L-citrulline pocket. Residues G129 and T131 each coordinate ATP. Positions 131, 135, and 136 each coordinate L-aspartate. Residue N135 participates in L-citrulline binding. Residue D136 coordinates ATP. Residues R139 and S192 each contribute to the L-citrulline site. D194 contributes to the ATP binding site. L-citrulline is bound by residues T201, E203, and E280.

It belongs to the argininosuccinate synthase family. Type 2 subfamily. As to quaternary structure, homotetramer.

The protein localises to the cytoplasm. The enzyme catalyses L-citrulline + L-aspartate + ATP = 2-(N(omega)-L-arginino)succinate + AMP + diphosphate + H(+). Its pathway is amino-acid biosynthesis; L-arginine biosynthesis; L-arginine from L-ornithine and carbamoyl phosphate: step 2/3. In Pectobacterium carotovorum subsp. carotovorum (strain PC1), this protein is Argininosuccinate synthase.